We begin with the raw amino-acid sequence, 559 residues long: Urocanate hydratase (559 aa).

NAD(+)-binding positions include 53 to 54 (GG), Gln131, 177 to 179 (GMG), Glu197, Arg202, 243 to 244 (NA), 264 to 268 (QTSAH), 274 to 275 (YL), and Tyr323. Residue Cys411 is part of the active site. Gly493 lines the NAD(+) pocket.

This sequence belongs to the urocanase family. Requires NAD(+) as cofactor.

It is found in the cytoplasm. It carries out the reaction 4-imidazolone-5-propanoate = trans-urocanate + H2O. It functions in the pathway amino-acid degradation; L-histidine degradation into L-glutamate; N-formimidoyl-L-glutamate from L-histidine: step 2/3. Catalyzes the conversion of urocanate to 4-imidazolone-5-propionate. The protein is Urocanate hydratase of Pseudomonas aeruginosa (strain LESB58).